The sequence spans 206 residues: GTP-binding protein Rho3 (206 aa).

24-31 serves as a coordination point for GTP; that stretch reads GDGACGKT. Positions 46–54 match the Effector region motif; sequence YEPTVFENY. GTP is bound by residues 71–75 and 129–132; these read DTAGQ and SKCD. Cysteine 203 carries the cysteine methyl ester modification. The S-geranylgeranyl cysteine moiety is linked to residue cysteine 203. Residues 204–206 constitute a propeptide, removed in mature form; the sequence is CVM.

The protein belongs to the small GTPase superfamily. Rho family.

The protein localises to the cell membrane. The polypeptide is GTP-binding protein Rho3 (RHO3) (Schizophyllum commune (Split gill fungus)).